The sequence spans 158 residues: Putative zinc-binding protein ORF9 (158 aa).

An RING-type; degenerate zinc finger spans residues 72 to 111; that stretch reads CPVCGRAVVGPTVREACGHVTCNACETEACAVDRLCIGGG. The interval 126 to 158 is disordered; the sequence is GPRWRGPRPTRPEAHEAVQRSRGSSEDACTCAP. Over residues 135–150 the composition is skewed to basic and acidic residues; it reads TRPEAHEAVQRSRGSS.

The chain is Putative zinc-binding protein ORF9 (ORF9) from Ictalurid herpesvirus 1 (strain Auburn) (IcHV-1).